The following is a 922-amino-acid chain: GPI inositol-deacylase (922 aa).

The Cytoplasmic portion of the chain corresponds to 1-11 (MFLHSVNLWNL). Residues 12–32 (AFYVFMVFLATLGLWDVFFGF) traverse the membrane as a helical segment. Topologically, residues 33 to 597 (EENKCSMSYM…GQVVRFHGGA (565 aa)) are lumenal. The active site involves Ser-174. N-linked (GlcNAc...) asparagine glycosylation is found at Asn-363, Asn-402, and Asn-558. The helical transmembrane segment at 598 to 618 (LPAYVVSSILLAYGGQLYSLL) threads the bilayer. The Cytoplasmic segment spans residues 619 to 641 (STGYCLEYSTILDKEAKPYKVDP). A helical membrane pass occupies residues 642-662 (FVIMIKFLLGYKWFKELWDAV). Residues 663 to 668 (LLPELD) are Lumenal-facing. A helical membrane pass occupies residues 669–689 (AIVLTSQSMCFPLVSLILFLF). Residues 690–694 (GTCTA) lie on the Cytoplasmic side of the membrane. Residues 695 to 715 (YWSGLLSSTSVQLLSSLWLAL) form a helical membrane-spanning segment. Topologically, residues 716–733 (KRPAELPKDIKVMSPDLP) are lumenal. Residues 734 to 754 (VLTVVFLIVSWTTCGALAILL) traverse the membrane as a helical segment. Topologically, residues 755–817 (SYLYYVFKVV…DAEDSLRMHS (63 aa)) are cytoplasmic. A disordered region spans residues 776-798 (NQPVNPKHSRRSEKKSNHHKDSA). Basic residues predominate over residues 782 to 793 (KHSRRSEKKSNH). The chain crosses the membrane as a helical span at residues 818–838 (TVINLLTWVVLLSMPSLIYWL). Over 839 to 894 (KNLRYYFKLSPDPCKPLAFLLIPAIAILGNTHTVSVKSSKLLKTVSQFPLPLAVGV) the chain is Lumenal. A helical transmembrane segment spans residues 895-915 (IAFGSSHLYRVPCFVIIPLVF). Over 916–922 (HALCNFM) the chain is Cytoplasmic.

It belongs to the GPI inositol-deacylase family.

The protein localises to the endoplasmic reticulum membrane. Functionally, GPI inositol-deacylase that catalyzes the remove of the acyl chain linked to the 2-OH position of inositol ring from the GPI-anchored protein (GPI-AP) in the endoplasmic reticulum. Initiates the post-attachment remodeling phase of GPI-AP biogenesis and participates in endoplasmic reticulum (ER)-to-Golgi transport of GPI-anchored protein. This is GPI inositol-deacylase from Mus musculus (Mouse).